A 523-amino-acid polypeptide reads, in one-letter code: MAAKKVDVLLIGGGIMSATLGVWLRELEPTWSMQMLERLDGVALESSNGWNNAGTGHSALAELNYTPEDDNGNIKITQAVNINESFQISRQFWAWQVRNGVLKNPRSFINHTPHMSFVWGDENVAYLEKRYQALKASPLFAGMEFSTDPEQIKKWVPLMMEGRDPSQKLGATWSPLGTDMEFGEITRQFVSHLQSDQNFDLQVNSEVSDIQRNADGSWRVTYTNTKTDAEQVVDAKFVFIGAGGGALHLLQMSGVPEADDYAGFPVGGSFLINENPDVTMQHLAKAYGKASVGSPPMSVPHLDTRVLGGKRVILFGPFATFSTKFLKEGSYFDLVSSVTTSNAWPMVRVGIDEYPLVEYLAGQLMMSDDDRFAALKEYFPNAKQGEWRLWQAGQRVQIIKRDEEKGGVLRLGTEVVAAKDGSIAGLLGASPGASTAAPIMLSVLEKVFKDKVATPEWQAKLRQIVPSYGTKLNDDPEKVREEWAYTAEHLQLPTPPQIDLEALKGAGAAPAGAPVKKVPDIAL.

Belongs to the MQO family. It depends on FAD as a cofactor.

It catalyses the reaction (S)-malate + a quinone = a quinol + oxaloacetate. It functions in the pathway carbohydrate metabolism; tricarboxylic acid cycle; oxaloacetate from (S)-malate (quinone route): step 1/1. In Agrobacterium fabrum (strain C58 / ATCC 33970) (Agrobacterium tumefaciens (strain C58)), this protein is Probable malate:quinone oxidoreductase.